The chain runs to 71 residues: MRTLCSLLLICCLLFSYDTPVVGELKHLGLKTEFEQCQRIRGYCLNTYCRFPTSHVGSCYPEKRYCCKNIR.

The signal sequence occupies residues 1–23; sequence MRTLCSLLLICCLLFSYDTPVVG. 3 disulfide bridges follow: cysteine 37-cysteine 66, cysteine 44-cysteine 59, and cysteine 49-cysteine 67.

This sequence belongs to the beta-defensin family.

Its subcellular location is the secreted. In terms of biological role, has antibacterial activity. The chain is Beta-defensin 9 (Defb9) from Rattus norvegicus (Rat).